A 639-amino-acid chain; its full sequence is Extracellular metalloproteinase 1 (639 aa).

Positions 1–19 (MHGLLLAAGLISLPLHVLA) are cleaved as a signal peptide. A propeptide spanning residues 20 to 250 (HPQPSSTSLA…VHNVVDYVAH (231 aa)) is cleaved from the precursor. An N-linked (GlcNAc...) asparagine glycan is attached at N291. H434 is a binding site for Zn(2+). Residue E435 is part of the active site. H438 serves as a coordination point for Zn(2+). N-linked (GlcNAc...) asparagine glycosylation is present at N598.

The protein belongs to the peptidase M36 family. Zn(2+) is required as a cofactor.

The protein localises to the secreted. Its function is as follows. Secreted metalloproteinase probably acting as a virulence factor. This chain is Extracellular metalloproteinase 1 (MEP1), found in Arthroderma otae (strain ATCC MYA-4605 / CBS 113480) (Microsporum canis).